The primary structure comprises 246 residues: TATA-box-binding protein (246 aa).

Residues 1 to 27 are disordered; the sequence is MSSDKTSQQTFKLAPNNSVAQSNSIDQ. Repeat copies occupy residues 53-129 and 143-220.

This sequence belongs to the TBP family. Belongs to the TFIID complex together with the TBP-associated factors (TAFs). Binds DNA as monomer.

Its subcellular location is the nucleus. Its function is as follows. General transcription factor that functions at the core of the DNA-binding multiprotein factor TFIID. Binding of TFIID to the TATA box is the initial transcriptional step of the pre-initiation complex (PIC), playing a role in the activation of eukaryotic genes transcribed by RNA polymerase II. The chain is TATA-box-binding protein from Tetrahymena thermophila.